Reading from the N-terminus, the 997-residue chain is DNA polymerase I (997 aa).

One can recognise a 5'-3' exonuclease domain in the interval 174–261 (VMPTQLLDLF…VPCVFSLEDS (88 aa)). In terms of domain architecture, 3'-5' exonuclease spans 428 to 589 (VPDVSLHTES…LYHYLKLRLE (162 aa)).

Belongs to the DNA polymerase type-A family.

It carries out the reaction DNA(n) + a 2'-deoxyribonucleoside 5'-triphosphate = DNA(n+1) + diphosphate. In terms of biological role, in addition to polymerase activity, this DNA polymerase exhibits 3'-5' and 5'-3' exonuclease activity. The chain is DNA polymerase I (polA) from Treponema pallidum (strain Nichols).